Here is a 347-residue protein sequence, read N- to C-terminus: Heat-inducible transcription repressor HrcA (347 aa).

This sequence belongs to the HrcA family.

Functionally, negative regulator of class I heat shock genes (grpE-dnaK-dnaJ and groELS operons). Prevents heat-shock induction of these operons. The polypeptide is Heat-inducible transcription repressor HrcA (Lactococcus lactis subsp. lactis (strain IL1403) (Streptococcus lactis)).